The chain runs to 695 residues: Interleukin-1 receptor accessory protein-like 1 (695 aa).

A signal peptide spans 1 to 24; that stretch reads MKAPIPHLILLYATFTQSLKVVTK. The region spanning 25–134 is the Ig-like C2-type 1 domain; the sequence is RGSADGCTDW…YCMKVSISLT (110 aa). The Extracellular portion of the chain corresponds to 25 to 357; the sequence is RGSADGCTDW…LLHKRELMYT (333 aa). Intrachain disulfides connect Cys-31–Cys-126 and Cys-53–Cys-118. Asn-63, Asn-122, and Asn-138 each carry an N-linked (GlcNAc...) asparagine glycan. Cystine bridges form between Cys-143–Cys-185 and Cys-164–Cys-216. 2 Ig-like C2-type domains span residues 143–232 and 242–350; these read CYNS…TELT and PKLL…VLLH. N-linked (GlcNAc...) asparagine glycans are attached at residues Asn-213, Asn-264, and Asn-331. The cysteines at positions 267 and 334 are disulfide-linked. The chain crosses the membrane as a helical span at residues 358–378; that stretch reads VELAGGLGAILLLLICSVTIY. Topologically, residues 379-695 are cytoplasmic; the sequence is KCYKIEIMLF…RETSISSVIW (317 aa). Residues 403–558 form the TIR domain; it reads KDYDAYLSYT…KFWKRLQYEM (156 aa). Glu-490 is a catalytic residue. Residues 548 to 643 form an interaction with NCS1 region; the sequence is SKFWKRLQYE…TGTLPLTSIG (96 aa). Positions 657–679 are disordered; it reads NGQRPQTKSNREPNPDEAHTNSA. Basic and acidic residues predominate over residues 665 to 675; the sequence is SNREPNPDEAH.

Belongs to the interleukin-1 receptor family. As to quaternary structure, homodimer. Interacts (calcium-independent) with NCS1/FREQ. Interacts (via the first immunoglobilin domain) with PTPRD (via the second immunoglobilin domain); this interaction is PTPRD-splicing-dependent and induces pre- and post-synaptic differentiation of neurons and is required for IL1RAPL1-mediated synapse formation. In terms of tissue distribution, detected in total brain extracts, olfactory bulb, hippocampus and striatum (at protein level).

The protein localises to the cell membrane. It is found in the cytoplasm. Its subcellular location is the cell projection. The protein resides in the axon. It localises to the dendrite. The catalysed reaction is NAD(+) + H2O = ADP-D-ribose + nicotinamide + H(+). Functionally, may regulate secretion and presynaptic differentiation through inhibition of the activity of N-type voltage-gated calcium channel. May activate the MAP kinase JNK. Plays a role in neurite outgrowth. During dendritic spine formation can bidirectionally induce pre- and post-synaptic differentiation of neurons by trans-synaptically binding to PTPRD. This Mus musculus (Mouse) protein is Interleukin-1 receptor accessory protein-like 1 (Il1rapl1).